The primary structure comprises 1638 residues: Non-structural polyprotein 1AB (1638 aa).

The stretch at 130–222 forms a coiled coil; sequence LVHQVMEKTR…KEKENALVSV (93 aa). Transmembrane regions (helical) follow at residues 220-240, 379-398, 407-427, 437-457, 479-499, and 507-527; these read VSVG…FGLI, VMSY…VLAG, APFI…CVAV, FILF…LLWL, ALVY…GVTL, and ILMF…CTTI. Residues His600, Asp632, and Ser697 each act as charge relay system; for serine protease activity in the active site. Residues 758–788 adopt a coiled-coil conformation; that stretch reads KVSHAAILKELEELREEVQFLKKKCVTYDDY. Tyr834 carries the O-(5'-phospho-RNA)-tyrosine modification. A RdRp catalytic domain is found at 1381–1515; that stretch reads RYFVEMDWTR…SIRKGFVEYE (135 aa).

It belongs to the astroviridae polyprotein 1AB family. In terms of assembly, monomer. Post-translationally, cleaved by the viral and host proteases. The protease is probably autocatalytically cleaved.

It localises to the host membrane. It carries out the reaction RNA(n) + a ribonucleoside 5'-triphosphate = RNA(n+1) + diphosphate. Responsible for the cleavage of the polyprotein into functional products. Functionally, protein covalently attached to the 5' extremity of the genomic and subgenomic RNAs. It may serve as a primer for the replicase. The chain is Non-structural polyprotein 1AB (ORF1) from Turkey astrovirus 2 (TAstV-2).